Here is a 52-residue protein sequence, read N- to C-terminus: Transmembrane protein ORF52 (52 aa).

2 consecutive transmembrane segments (helical) span residues 11–31 (AFLG…EIIT) and 32–52 (FMAL…GLFV).

It localises to the host membrane. In Acidianus filamentous virus 1 (isolate United States/Yellowstone) (AFV-1), this protein is Transmembrane protein ORF52.